Here is a 102-residue protein sequence, read N- to C-terminus: MAKGQSLQDPFLNALRRERVPVSIYLVNGIKLQGQIESFDQFVILLKNTVSQMVYKHAISTVVPSRPVSHHSNNASGGTSSNYHHGSSAQNTSAQQDSEETE.

The Sm domain occupies 9-68 (DPFLNALRRERVPVSIYLVNGIKLQGQIESFDQFVILLKNTVSQMVYKHAISTVVPSRPV). The tract at residues 63–102 (VPSRPVSHHSNNASGGTSSNYHHGSSAQNTSAQQDSEETE) is disordered. The segment covering 70–96 (HHSNNASGGTSSNYHHGSSAQNTSAQQ) has biased composition (polar residues).

It belongs to the Hfq family. As to quaternary structure, homohexamer.

Its function is as follows. RNA chaperone that binds small regulatory RNA (sRNAs) and mRNAs to facilitate mRNA translational regulation in response to envelope stress, environmental stress and changes in metabolite concentrations. Also binds with high specificity to tRNAs. The sequence is that of RNA-binding protein Hfq from Shigella boydii serotype 18 (strain CDC 3083-94 / BS512).